Reading from the N-terminus, the 577-residue chain is CTP synthase (577 aa).

Positions 1–268 are amidoligase domain; that stretch reads MDPAFIFITG…GALLCERLRL (268 aa). Serine 14 contacts CTP. Serine 14 lines the UTP pocket. Residue 15-20 coordinates ATP; it reads SLGKGI. Tyrosine 55 provides a ligand contact to L-glutamine. Residue aspartate 72 coordinates ATP. Aspartate 72 and glutamate 142 together coordinate Mg(2+). Residues 149 to 151, 189 to 194, and lysine 225 contribute to the CTP site; these read DIE and KTKPLQ. UTP contacts are provided by residues 189–194 and lysine 225; that span reads KTKPLQ. Residues 333–575 enclose the Glutamine amidotransferase type-1 domain; the sequence is TVALVGKYVS…VAAGLERKDS (243 aa). L-glutamine is bound at residue glycine 396. Residue cysteine 423 is the Nucleophile; for glutamine hydrolysis of the active site. L-glutamine is bound by residues 424-427, glutamate 447, and arginine 503; that span reads LGMQ. Residues histidine 548 and glutamate 550 contribute to the active site.

Belongs to the CTP synthase family. As to quaternary structure, homotetramer.

The catalysed reaction is UTP + L-glutamine + ATP + H2O = CTP + L-glutamate + ADP + phosphate + 2 H(+). It catalyses the reaction L-glutamine + H2O = L-glutamate + NH4(+). The enzyme catalyses UTP + NH4(+) + ATP = CTP + ADP + phosphate + 2 H(+). It functions in the pathway pyrimidine metabolism; CTP biosynthesis via de novo pathway; CTP from UDP: step 2/2. Allosterically activated by GTP, when glutamine is the substrate; GTP has no effect on the reaction when ammonia is the substrate. The allosteric effector GTP functions by stabilizing the protein conformation that binds the tetrahedral intermediate(s) formed during glutamine hydrolysis. Inhibited by the product CTP, via allosteric rather than competitive inhibition. Functionally, catalyzes the ATP-dependent amination of UTP to CTP with either L-glutamine or ammonia as the source of nitrogen. Regulates intracellular CTP levels through interactions with the four ribonucleotide triphosphates. The chain is CTP synthase from Treponema pallidum (strain Nichols).